The sequence spans 290 residues: Nucleotide-binding protein Sde_3181 (290 aa).

Residue G8–T15 coordinates ATP. GTP is bound at residue D60–N63.

The protein belongs to the RapZ-like family.

In terms of biological role, displays ATPase and GTPase activities. The protein is Nucleotide-binding protein Sde_3181 of Saccharophagus degradans (strain 2-40 / ATCC 43961 / DSM 17024).